Here is a 235-residue protein sequence, read N- to C-terminus: MNIVIDVGNNYIKIGAFSGGKLQWTKTYSRLHDVLQAVQAEKPVHVFISSVRNQTDFSALETVTQVHFLNKHTRLPIDIDYETPHTLGTDRIAAAVGAATLFPGCNNLFFDLGTCLTHGFINTKAVFEGGSISPGVEMRFKALAHFTEKLPLVKAEKEPPLTGKSTSGSIMSGVLNGIQFEIEGFIEAYQNKYTPINVLLTGGNASLFEKRLKEPIFVIAELNLIGLNRILNYNV.

Aspartate 6–lysine 13 serves as a coordination point for ATP. Substrate contacts are provided by residues tyrosine 81 and glycine 88 to arginine 91. Aspartate 90 serves as the catalytic Proton acceptor. Residue aspartate 111 coordinates K(+). Threonine 114 contacts ATP. Residue threonine 166 coordinates substrate.

The protein belongs to the type III pantothenate kinase family. Homodimer. Requires NH4(+) as cofactor. K(+) is required as a cofactor.

The protein resides in the cytoplasm. It catalyses the reaction (R)-pantothenate + ATP = (R)-4'-phosphopantothenate + ADP + H(+). It functions in the pathway cofactor biosynthesis; coenzyme A biosynthesis; CoA from (R)-pantothenate: step 1/5. Functionally, catalyzes the phosphorylation of pantothenate (Pan), the first step in CoA biosynthesis. This chain is Type III pantothenate kinase, found in Cytophaga hutchinsonii (strain ATCC 33406 / DSM 1761 / CIP 103989 / NBRC 15051 / NCIMB 9469 / D465).